A 215-amino-acid polypeptide reads, in one-letter code: 2-dehydro-3-deoxy-phosphogluconate aldolase (215 aa).

Glu-46 serves as the catalytic Proton acceptor. The pyruvate site is built by Arg-50, Thr-74, and Lys-134. The Schiff-base intermediate with substrate role is filled by Lys-134.

Belongs to the KHG/KDPG aldolase family. In terms of assembly, homotrimer.

It catalyses the reaction 2-dehydro-3-deoxy-6-phospho-D-gluconate = D-glyceraldehyde 3-phosphate + pyruvate. Its pathway is carbohydrate acid metabolism; 2-dehydro-3-deoxy-D-gluconate degradation; D-glyceraldehyde 3-phosphate and pyruvate from 2-dehydro-3-deoxy-D-gluconate: step 2/2. In terms of biological role, involved in the degradation of glucose via the Entner-Doudoroff pathway. Catalyzes the reversible, stereospecific retro-aldol cleavage of 2-keto-3-deoxy-6-phosphogluconate (KDPG) to pyruvate and D-glyceraldehyde-3-phosphate. Involved in the degradation of 3,6-anhydro-L-galactose (L-AnG), which is the major monomeric sugar of red macroalgae. The cleavage of KDPG to glyceraldehyde 3-phosphate and pyruvate is the sixth step of this pathway. The protein is 2-dehydro-3-deoxy-phosphogluconate aldolase of Pseudoalteromonas atlantica (strain T6c / ATCC BAA-1087).